Reading from the N-terminus, the 332-residue chain is GTPase Obg (332 aa).

Residues 1–159 (MKFLDQAKIY…RWVWLRLKLI (159 aa)) enclose the Obg domain. Positions 160–328 (ADAGLVGLPN…VLRETLRMIR (169 aa)) constitute an OBG-type G domain. Residues 166–173 (GLPNAGKS), 191–195 (FTTLH), 213–216 (DIPG), 280–283 (NKMD), and 309–311 (SAA) contribute to the GTP site. Residues Ser173 and Thr193 each coordinate Mg(2+).

The protein belongs to the TRAFAC class OBG-HflX-like GTPase superfamily. OBG GTPase family. Monomer. Mg(2+) serves as cofactor.

The protein localises to the cytoplasm. In terms of biological role, an essential GTPase which binds GTP, GDP and possibly (p)ppGpp with moderate affinity, with high nucleotide exchange rates and a fairly low GTP hydrolysis rate. Plays a role in control of the cell cycle, stress response, ribosome biogenesis and in those bacteria that undergo differentiation, in morphogenesis control. The polypeptide is GTPase Obg (Acidiphilium cryptum (strain JF-5)).